The primary structure comprises 161 residues: Allophycocyanin alpha chain (161 aa).

Asparagine 71 bears the N4-methylasparagine mark. Cysteine 81 is a binding site for (2R,3E)-phycocyanobilin.

It belongs to the phycobiliprotein family. Component of the phycobilisome. Heterodimer of an alpha and a beta chain. Contains one covalently linked phycocyanobilin chromophore.

Its subcellular location is the cellular thylakoid membrane. In terms of biological role, light-harvesting photosynthetic bile pigment-protein from the phycobiliprotein complex. Allophycocyanin has a maximum absorption at approximately 650 nanometers. The sequence is that of Allophycocyanin alpha chain (apcA) from Arthrospira platensis (Spirulina platensis).